The primary structure comprises 1127 residues: Testis-expressed protein 2 (1127 aa).

Disordered stretches follow at residues 1-27 (MTSL…HVQR) and 133-279 (AVSP…SFFK). The span at 133 to 187 (AVSPGSSSSGPLASSPSVSSLSEQKTSSSSPLSSPSKSPILSSSASTSTLSSAKP) shows a compositional bias: low complexity. Ser-196 carries the post-translational modification Phosphoserine. The segment covering 249 to 275 (QFTQPRNTGGDSKTAPSSPLTSPSDTR) has biased composition (polar residues). Thr-262 is modified (phosphothreonine). Residues Ser-265, Ser-266, Ser-270, and Ser-295 each carry the phosphoserine modification. N-linked (GlcNAc...) asparagine glycosylation occurs at Asn-330. The disordered stretch occupies residues 348–386 (EEECDSEGDGYGSDSNIPRSDHPKSTGEPTREIELKSSQ). A compositionally biased stretch (basic and acidic residues) spans 366-382 (RSDHPKSTGEPTREIEL). The next 2 membrane-spanning stretches (helical) occupy residues 475–495 (TLGF…PHYV) and 497–517 (GLFL…WFFT). Disordered stretches follow at residues 648–685 (KAQT…QRDQ), 715–764 (KKSS…QKEL), 786–816 (QESR…PPSE), and 947–980 (DEES…GYVG). The span at 650–670 (QTDKETSEEKPPAEGSEDPKK) shows a compositional bias: basic and acidic residues. Residues Ser-732, Ser-738, Ser-744, Ser-748, Ser-751, Ser-798, and Ser-815 each carry the phosphoserine modification. A compositionally biased stretch (polar residues) spans 735-750 (NSPSGHLTHSRSSSKG). The span at 787–804 (ESRSPQRSPLQSAESSPT) shows a compositional bias: polar residues. One can recognise an SMP-LTD domain in the interval 816-1101 (EEEEQEAWVN…MPNMDDVYIT (286 aa)). The segment covering 947–962 (DEESSSAGSSEEDDAP) has biased composition (acidic residues).

The protein resides in the endoplasmic reticulum membrane. It is found in the nucleus membrane. During endoplasmic reticulum (ER) stress or when cellular ceramide levels increase, may induce contacts between the ER and medial-Golgi complex to facilitate non-vesicular transport of ceramides from the ER to the Golgi complex where they are converted to complex sphingolipids, preventing toxic ceramide accumulation. This is Testis-expressed protein 2 (TEX2) from Homo sapiens (Human).